Consider the following 408-residue polypeptide: LL-diaminopimelate aminotransferase (408 aa).

Positions 15 and 42 each coordinate substrate. Pyridoxal 5'-phosphate contacts are provided by residues Y72, 108–109 (SK), Y132, N187, Y218, and 246–248 (SFS). Substrate-binding residues include K109, Y132, and N187. K249 is subject to N6-(pyridoxal phosphate)lysine. Positions 257 and 292 each coordinate pyridoxal 5'-phosphate. Residues N292 and R388 each coordinate substrate.

This sequence belongs to the class-I pyridoxal-phosphate-dependent aminotransferase family. LL-diaminopimelate aminotransferase subfamily. Homodimer. The cofactor is pyridoxal 5'-phosphate.

It carries out the reaction (2S,6S)-2,6-diaminopimelate + 2-oxoglutarate = (S)-2,3,4,5-tetrahydrodipicolinate + L-glutamate + H2O + H(+). Its pathway is amino-acid biosynthesis; L-lysine biosynthesis via DAP pathway; LL-2,6-diaminopimelate from (S)-tetrahydrodipicolinate (aminotransferase route): step 1/1. Its function is as follows. Involved in the synthesis of meso-diaminopimelate (m-DAP or DL-DAP), required for both lysine and peptidoglycan biosynthesis. Catalyzes the direct conversion of tetrahydrodipicolinate to LL-diaminopimelate. This is LL-diaminopimelate aminotransferase from Leptospira interrogans serogroup Icterohaemorrhagiae serovar Lai (strain 56601).